The primary structure comprises 952 residues: Substrate-adhesion molecule (952 aa).

The signal sequence occupies residues 1 to 25 (MKSQKIGSMILLIGILLAIFNFAYS). Over 26–527 (DDDIERFSIN…TWFFDTNVET (502 aa)) the chain is Extracellular. N78, N182, N231, N243, and N412 each carry an N-linked (GlcNAc...) asparagine glycan. Residues 438 to 471 (EIRRCKDSCNGYGTCNTANYTCVCDSAHMGETCN) form the EGF-like domain. Disulfide bonds link C442–C452, C446–C459, and C461–C470. Residue N456 is glycosylated (N-linked (GlcNAc...) asparagine). The helical transmembrane segment at 528-548 (GVIALACIFIAFVGILYIIDI) threads the bilayer. Residues 549 to 591 (GTTVPIDIKRAKDYAEENKSGQFPKATHEEASVLWWRDQRSHK) lie on the Cytoplasmic side of the membrane. Residues 592–612 (AWTFMDQFQLISLVSHIGVVF) traverse the membrane as a helical segment. The Extracellular segment spans residues 613 to 678 (PSRFISFTEY…GDLYLLPNIL (66 aa)). A helical transmembrane segment spans residues 679-699 (FWFGLLLGVFLVPLLLAYAII). Over 700–722 (SFMESLIHWKEVVTNRLIHVLVR) the chain is Cytoplasmic. Residues 723-743 (ILTFGYIGVLIAASFAMVTPL) traverse the membrane as a helical segment. Topologically, residues 744–752 (HDYRIIIPG) are extracellular. The helical transmembrane segment at 753 to 773 (AIIFVLYGIGLPIAIWFLLAV) threads the bilayer. Topologically, residues 774–801 (PEARLHNPTFKQRFGCLYVHYKPKTDHR) are cytoplasmic. The chain crosses the membrane as a helical span at residues 802–822 (FVVFMFIKRFIMAVIIGILSF). The Extracellular segment spans residues 823 to 837 (KPMTNYPLTGTDLAV). A helical membrane pass occupies residues 838–858 (PIVQVVVIDIALIGYAVLLFI). Residues 859-868 (RKPYFDHYQL) are Cytoplasmic-facing. A helical membrane pass occupies residues 869–889 (WLEYLLTAINIVTVSLSLTHI). Residues 890-897 (KSPSAAGE) lie on the Extracellular side of the membrane. The chain crosses the membrane as a helical span at residues 898–918 (LIACLIQALALVACIAAYVVA). At 919-952 (WLQMRSSFIKKVKKYLCCCCKSSKSSGEIDLSKK) the chain is on the cytoplasmic side.

It localises to the cell membrane. In terms of biological role, involved in substrate adhesion, myosin-independent cytokinesis, organization of actin cytoskeleton, and phagocytosis. This is Substrate-adhesion molecule (sadA) from Dictyostelium discoideum (Social amoeba).